The primary structure comprises 138 residues: Phosphoribosyl-AMP cyclohydrolase (138 aa).

Residue D84 participates in Mg(2+) binding. C85 contacts Zn(2+). The Mg(2+) site is built by D86 and D88. Zn(2+)-binding residues include C102 and C109.

The protein belongs to the PRA-CH family. As to quaternary structure, homodimer. It depends on Mg(2+) as a cofactor. Zn(2+) serves as cofactor.

The protein localises to the cytoplasm. The enzyme catalyses 1-(5-phospho-beta-D-ribosyl)-5'-AMP + H2O = 1-(5-phospho-beta-D-ribosyl)-5-[(5-phospho-beta-D-ribosylamino)methylideneamino]imidazole-4-carboxamide. It functions in the pathway amino-acid biosynthesis; L-histidine biosynthesis; L-histidine from 5-phospho-alpha-D-ribose 1-diphosphate: step 3/9. Its function is as follows. Catalyzes the hydrolysis of the adenine ring of phosphoribosyl-AMP. This chain is Phosphoribosyl-AMP cyclohydrolase, found in Burkholderia vietnamiensis (strain G4 / LMG 22486) (Burkholderia cepacia (strain R1808)).